Consider the following 63-residue polypeptide: Large ribosomal subunit protein bL28 (63 aa).

The protein belongs to the bacterial ribosomal protein bL28 family.

The polypeptide is Large ribosomal subunit protein bL28 (Clostridium kluyveri (strain NBRC 12016)).